We begin with the raw amino-acid sequence, 1651 residues long: Alsin (1651 aa).

3 RCC1 repeats span residues 59-108 (DGEV…AVTE), 109-167 (SGVV…ALSI), and 169-218 (REIW…ALVQ). The tract at residues 444–476 (REEQVKQESLQGKKSSSLMDIREEESEGGSRRL) is disordered. Polar residues predominate over residues 450 to 461 (QESLQGKKSSSL). Residues Ser-459, Ser-460, Ser-477, and Ser-486 each carry the phosphoserine modification. Thr-504 is subject to Phosphothreonine. RCC1 repeat units lie at residues 519-570 (RTEV…ALTA) and 572-621 (SQVY…FLVD). Lys-527 is subject to N6-acetyllysine. Positions 684 to 879 (GYIASLHELA…ESLALHLGKK (196 aa)) constitute a DH domain. The 107-residue stretch at 895 to 1001 (GKMTDSLRKP…RAISQAVDQA (107 aa)) folds into the PH domain. 8 MORN repeats span residues 1043–1065 (YDGR…DGKV), 1066–1088 (YSGT…NKAL), 1094–1116 (YVGH…SGEV), 1117–1139 (FEGC…KLTS), 1145–1167 (FIGQ…TRGE), 1169–1191 (YMGM…FGLY), 1192–1214 (YEGN…DDTI), and 1215–1238 (YEGE…NGDY). Ser-1329 carries the post-translational modification Phosphoserine. The VPS9 domain maps to 1507-1651 (KQPDIALLGF…YYQIQREKLN (145 aa)).

As to quaternary structure, forms a heteromeric complex with ALS2CL. Interacts with ALS2CL.

Functionally, may act as a GTPase regulator. Controls survival and growth of spinal motoneurons. This chain is Alsin (Als2), found in Rattus norvegicus (Rat).